Reading from the N-terminus, the 317-residue chain is Cell division protein FtsQ (317 aa).

Residues 1–63 (MDGGGRFVFA…RIHIPAHTGT (63 aa)) are Cytoplasmic-facing. A helical membrane pass occupies residues 64 to 82 (ISAVAFYAMIGLYGMSLGG). Residues 83 to 317 (HTNIVTQTTT…KALKKAEKNT (235 aa)) lie on the Periplasmic side of the membrane. Residues 97–165 (FAVEDVKVSG…KTVEVRLKER (69 aa)) enclose the POTRA domain.

The protein belongs to the FtsQ/DivIB family. FtsQ subfamily.

The protein localises to the cell inner membrane. Essential cell division protein. The polypeptide is Cell division protein FtsQ (Agrobacterium fabrum (strain C58 / ATCC 33970) (Agrobacterium tumefaciens (strain C58))).